Here is a 237-residue protein sequence, read N- to C-terminus: Phosphoribosylaminoimidazole-succinocarboxamide synthase (237 aa).

Belongs to the SAICAR synthetase family.

The enzyme catalyses 5-amino-1-(5-phospho-D-ribosyl)imidazole-4-carboxylate + L-aspartate + ATP = (2S)-2-[5-amino-1-(5-phospho-beta-D-ribosyl)imidazole-4-carboxamido]succinate + ADP + phosphate + 2 H(+). It participates in purine metabolism; IMP biosynthesis via de novo pathway; 5-amino-1-(5-phospho-D-ribosyl)imidazole-4-carboxamide from 5-amino-1-(5-phospho-D-ribosyl)imidazole-4-carboxylate: step 1/2. This chain is Phosphoribosylaminoimidazole-succinocarboxamide synthase, found in Hamiltonella defensa subsp. Acyrthosiphon pisum (strain 5AT).